Reading from the N-terminus, the 129-residue chain is Small ribosomal subunit protein uS12 (129 aa).

The interval 1 to 25 (MPTYNQLVRFGRKSKTRKTKSPALE) is disordered. A compositionally biased stretch (basic residues) spans 10 to 20 (FGRKSKTRKTK). Aspartate 89 is modified (3-methylthioaspartic acid). The segment at 109 to 129 (GRKQGRSRYGTPRKQVAVTKK) is disordered.

The protein belongs to the universal ribosomal protein uS12 family. In terms of assembly, part of the 30S ribosomal subunit. Contacts proteins S8 and S17. May interact with IF1 in the 30S initiation complex.

Functionally, with S4 and S5 plays an important role in translational accuracy. Interacts with and stabilizes bases of the 16S rRNA that are involved in tRNA selection in the A site and with the mRNA backbone. Located at the interface of the 30S and 50S subunits, it traverses the body of the 30S subunit contacting proteins on the other side and probably holding the rRNA structure together. The combined cluster of proteins S8, S12 and S17 appears to hold together the shoulder and platform of the 30S subunit. This chain is Small ribosomal subunit protein uS12, found in Rickettsia peacockii (strain Rustic).